Here is a 104-residue protein sequence, read N- to C-terminus: Inclusion membrane protein F (104 aa).

Transmembrane regions (helical) follow at residues Leu-39–Ala-59 and Leu-70–Ile-90.

The protein resides in the secreted. The protein localises to the host vacuole. It localises to the host pathogen-containing vacuole. Its subcellular location is the host pathogen-containing vacuole membrane. Functionally, inclusion membrane protein probably involved in early modification events of the chlamydial inclusion. This chain is Inclusion membrane protein F (incF), found in Chlamydia trachomatis serovar D (strain ATCC VR-885 / DSM 19411 / UW-3/Cx).